A 314-amino-acid polypeptide reads, in one-letter code: MQDLLLAKVESAMQASQVSALAGQTATVTKVSAATNLATITPTAAGQAPIIVKLDATRQVVELQALVGKTVMVGKTPAAIGGIGNWIALTPVTGAKAAAAATGAGQLVMMKVEGTAAAVNLPALAGKSFTIAQPPVAAGTKAAGMLYLNPVGGGDLIAINVQNAATQTGGLVGKTFVVAPSPVIGGTTGKFLVLKPLTAGAGKAVGGGAIAAKFIPAAVTGTGGAAAVGAGSASSLLTAGAGTVTPITAAGTGSAMLSAKGLGLGLGLGLGAWGPFLLGAAGLAGAAALYVWARRRHGTPDLSDDALLAAAGEE.

Residues 1 to 263 (MQDLLLAKVE…SAMLSAKGLG (263 aa)) are Cytoplasmic-facing. The interval 261–270 (GLGLGLGLGL) is GL repeat. A helical membrane pass occupies residues 264-284 (LGLGLGLGAWGPFLLGAAGLA). Residues 285–314 (GAAALYVWARRRHGTPDLSDDALLAAAGEE) lie on the Lumenal side of the membrane. The segment at 298–314 (GTPDLSDDALLAAAGEE) is magnetite-interacting component (MIC), binds Fe(2+).

Belongs to the magnetosome MamD/Mms5 family. In terms of processing, seen in gels as a band of about 7 kDa, suggesting it may undergo cleavage. Upon overexpression a larger (full-length) protein is seen in the cell inner membrane.

It is found in the magnetosome membrane. Its function is as follows. Helps regulate magnetite crystal morphology, probably in a single growth axis. May help control oxido-reduction reactions surrounding the crystal lattice of the forming magnetite mineral. Probably binds Fe(2+), may play a role in nucleation of magnetite crystal formation. Expression in a deletion mutant restores growth of spherical (wild-type) magnetite crystals. Increased protein levels allow crystal growth in the minor axis but not increased numbers of crystals. This is Magnetosome protein MamD (mamD) from Paramagnetospirillum magneticum (strain ATCC 700264 / AMB-1) (Magnetospirillum magneticum).